The following is a 460-amino-acid chain: MAESENRKELSESSQEEAGNQIMVEGLGEHLERGEDAAAGLGDDGKCGEEAAAGLGEEGENGEDTAAGSGEDGKKGGDTDEDSEADRPKGLIGYVLDTDFVESLPVKVKYRVLALKKLQTRAANLESKFLREFHDIERKFAEMYQPLLEKRRQIINAIYEPTEEECEYKSDSEDCDDEEMCHEEMYGNEEGMVHEYVDEDDGYEDYYYDYAVEEEEEEEEEDDIEATGEENKEEEDPKGIPDFWLTVLKNVDTLTPLIKKYDEPILKLLTDIKVKLSDPGEPLSFTLEFHFKPNEYFKNELLTKTYVLKSKLAYYDPHPYRGTAIEYSTGCEIDWNEGKNVTLKTIKKKQKHRIWGTIRTVTEDFPKDSFFNFFSPHGITSNGRDGNDDFLLGHNLRTYIIPRSVLFFSGDALESQQEGVVREVNDAIYDKIIYDNWMAAIEEVKACCKNLEALVEDIDR.

Basic and acidic residues-rich tracts occupy residues Met1–Ser11 and Leu27–Asp36. Disordered regions lie at residues Met1–Pro88 and Glu214–Lys238. Residues Glu214–Asp236 are compositionally biased toward acidic residues. Residues Ile346–His352 carry the Nuclear localization signal motif.

This sequence belongs to the nucleosome assembly protein (NAP) family.

Its subcellular location is the nucleus. Its function is as follows. Acidic protein which may be involved in interactions with other proteins or DNA. This Homo sapiens (Human) protein is Nucleosome assembly protein 1-like 2 (NAP1L2).